A 198-amino-acid polypeptide reads, in one-letter code: Segregation and condensation protein B (198 aa).

The interval 167–198 is disordered; sequence PKLADPEADDPDQNEMDLFFDRFNQSKEQEEE. A compositionally biased stretch (acidic residues) spans 172 to 181; sequence PEADDPDQNE.

The protein belongs to the ScpB family. In terms of assembly, homodimer. Homodimerization may be required to stabilize the binding of ScpA to the Smc head domains. Component of a cohesin-like complex composed of ScpA, ScpB and the Smc homodimer, in which ScpA and ScpB bind to the head domain of Smc. The presence of the three proteins is required for the association of the complex with DNA.

It is found in the cytoplasm. Participates in chromosomal partition during cell division. May act via the formation of a condensin-like complex containing Smc and ScpA that pull DNA away from mid-cell into both cell halves. This chain is Segregation and condensation protein B, found in Listeria welshimeri serovar 6b (strain ATCC 35897 / DSM 20650 / CCUG 15529 / CIP 8149 / NCTC 11857 / SLCC 5334 / V8).